The sequence spans 302 residues: ATP synthase mitochondrial F1 complex assembly factor 1 (302 aa).

This sequence belongs to the ATP11 family. In terms of assembly, interacts with ATP5F1B; involved in the assembly of the F1 component of the mitochondrial ATP synthase (ATPase).

The protein resides in the mitochondrion inner membrane. Functionally, has a complex stabilizing activity in the assembly of the mitochondrial F1-F0 complex. The chain is ATP synthase mitochondrial F1 complex assembly factor 1 (atpaf1) from Danio rerio (Zebrafish).